Here is a 355-residue protein sequence, read N- to C-terminus: Uroporphyrinogen decarboxylase (355 aa).

Substrate-binding positions include 38 to 42 (RQAGR), Asp87, Tyr162, Ser217, and His331.

The protein belongs to the uroporphyrinogen decarboxylase family. Homodimer.

The protein localises to the cytoplasm. The enzyme catalyses uroporphyrinogen III + 4 H(+) = coproporphyrinogen III + 4 CO2. It functions in the pathway porphyrin-containing compound metabolism; protoporphyrin-IX biosynthesis; coproporphyrinogen-III from 5-aminolevulinate: step 4/4. Functionally, catalyzes the decarboxylation of four acetate groups of uroporphyrinogen-III to yield coproporphyrinogen-III. This Streptomyces avermitilis (strain ATCC 31267 / DSM 46492 / JCM 5070 / NBRC 14893 / NCIMB 12804 / NRRL 8165 / MA-4680) protein is Uroporphyrinogen decarboxylase.